Consider the following 319-residue polypeptide: NADH-quinone oxidoreductase subunit H 1 (319 aa).

A run of 9 helical transmembrane segments spans residues 5–25, 78–98, 109–129, 147–167, 179–199, 214–234, 238–258, 262–282, and 294–314; these read ILTA…AGVF, LAPA…AFGE, VMFL…GALA, LAYE…AGSL, VWFI…GIAA, LVGG…FLGE, ILLV…GPWL, IWFG…RAAL, and AWKV…FIVV.

It belongs to the complex I subunit 1 family. In terms of assembly, NDH-1 is composed of 14 different subunits. Subunits NuoA, H, J, K, L, M, N constitute the membrane sector of the complex.

The protein resides in the cell inner membrane. The catalysed reaction is a quinone + NADH + 5 H(+)(in) = a quinol + NAD(+) + 4 H(+)(out). In terms of biological role, NDH-1 shuttles electrons from NADH, via FMN and iron-sulfur (Fe-S) centers, to quinones in the respiratory chain. The immediate electron acceptor for the enzyme in this species is believed to be ubiquinone. Couples the redox reaction to proton translocation (for every two electrons transferred, four hydrogen ions are translocated across the cytoplasmic membrane), and thus conserves the redox energy in a proton gradient. This subunit may bind ubiquinone. This is NADH-quinone oxidoreductase subunit H 1 from Rhodopseudomonas palustris (strain BisA53).